We begin with the raw amino-acid sequence, 130 residues long: Small ribosomal subunit protein uS9 (130 aa).

This sequence belongs to the universal ribosomal protein uS9 family.

The sequence is that of Small ribosomal subunit protein uS9 from Streptococcus thermophilus (strain CNRZ 1066).